An 87-amino-acid chain; its full sequence is MANHKSAIKRHKQSQKRAARNRAAKTRIKNVVKAVRAAVLQKDKDTAAQALTAAMSVLDKAAGKGVIHWKKAARKISRLTKAVGSVE.

A disordered region spans residues Met1–Thr26.

It belongs to the bacterial ribosomal protein bS20 family.

Binds directly to 16S ribosomal RNA. This chain is Small ribosomal subunit protein bS20, found in Nitratidesulfovibrio vulgaris (strain DSM 19637 / Miyazaki F) (Desulfovibrio vulgaris).